Here is a 538-residue protein sequence, read N- to C-terminus: Neutral protease B (538 aa).

An N-terminal signal peptide occupies residues 1-28 (MRNLTKTSLLLAGLCTAAQMVFVTHASA). Positions 29–223 (EESIEYDHTY…VIESFNAIHE (195 aa)) are cleaved as a propeptide — activation peptide. Position 365 (aspartate 365) interacts with Ca(2+). Histidine 369 serves as a coordination point for Zn(2+). The active site involves glutamate 370. Residues histidine 373 and glutamate 393 each contribute to the Zn(2+) site. Residues aspartate 404, aspartate 406, aspartate 407, glutamate 409, glutamate 412, tyrosine 415, threonine 416, isoleucine 419, and aspartate 422 each contribute to the Ca(2+) site. Residues 421–441 (GDSLRSLEDPSKQGNPDHYSN) are disordered. Histidine 453 functions as the Proton donor in the catalytic mechanism.

Belongs to the peptidase M4 family. Zn(2+) is required as a cofactor.

The protein resides in the secreted. Protease activity can be inhibited in vitro by either a zinc specific chelator, 1,10-phenanthroline, or a metal chelator, EDTA. The enzyme is resistant to phenylmethylsulfonyl fluoride and iodoacetic acid. In terms of biological role, protease able to cleave casein in vitro. The polypeptide is Neutral protease B (Bacillus subtilis (strain 168)).